The sequence spans 478 residues: Sulfate adenylyltransferase subunit 1 (478 aa).

The 217-residue stretch at 24–240 folds into the tr-type G domain; the sequence is KSMLRFLTCG…VLEDIDIDAD (217 aa). A G1 region spans residues 33 to 40; the sequence is GSVDDGKS. GTP is bound at residue 33 to 40; it reads GSVDDGKS. The interval 91–95 is G2; that stretch reads GITID. Residues 112–115 form a G3 region; it reads DTPG. GTP is bound by residues 112–116 and 167–170; these read DTPGH and NKMD. The G4 stretch occupies residues 167–170; sequence NKMD. The tract at residues 206-208 is G5; that stretch reads SAL.

This sequence belongs to the TRAFAC class translation factor GTPase superfamily. Classic translation factor GTPase family. CysN/NodQ subfamily. In terms of assembly, heterodimer composed of CysD, the smaller subunit, and CysN.

It catalyses the reaction sulfate + ATP + H(+) = adenosine 5'-phosphosulfate + diphosphate. It functions in the pathway sulfur metabolism; hydrogen sulfide biosynthesis; sulfite from sulfate: step 1/3. Functionally, with CysD forms the ATP sulfurylase (ATPS) that catalyzes the adenylation of sulfate producing adenosine 5'-phosphosulfate (APS) and diphosphate, the first enzymatic step in sulfur assimilation pathway. APS synthesis involves the formation of a high-energy phosphoric-sulfuric acid anhydride bond driven by GTP hydrolysis by CysN coupled to ATP hydrolysis by CysD. The protein is Sulfate adenylyltransferase subunit 1 of Aliivibrio salmonicida (strain LFI1238) (Vibrio salmonicida (strain LFI1238)).